The chain runs to 556 residues: Single-strand DNA-binding protein (556 aa).

Disordered regions lie at residues 1 to 95 and 527 to 556; these read MDPK…SEVE and FVRP…VNSL. Composition is skewed to polar residues over residues 10–25 and 36–51; these read ENIT…TSDF and VNST…GSQE. Composition is skewed to basic and acidic residues over residues 52 to 73 and 539 to 548; these read TPEH…RLDA and DSRRTYESRP.

Interacts with host VIP2 that promotes T-DNA integration into the host genome. Forms a complex made of virE2 and host proteins VIP1 and VBF. Forms heterodimers with the chaperone protein virE1 that prevent virE2 anarchic homopolymerization. Interacts with A.thaliana VIP1 that mediates its translocation to the host nucleus. Forms a complex made of VirE2, host VIP1 and VIP2 and single-stranded DNA (ssDNA).

It is found in the secreted. Its subcellular location is the host nucleus. Involved in DNA transformation; mediates the nuclear uptake of single-stranded DNA copies of the transferred DNA (T-DNA) element. Binds single-stranded but not double-stranded DNA regardless of nucleotide sequence composition. This Agrobacterium fabrum (strain C58 / ATCC 33970) (Agrobacterium tumefaciens (strain C58)) protein is Single-strand DNA-binding protein (virE2).